The sequence spans 420 residues: MNKAIASKILITLGFLFLYRVLAYIPIPGVDLAAIKAFFDSNSNNALGLFNMFSGNAVSRLSIISLGIMPYITSSIIMELLSATFPNLAKMKKERDGMQKYMQIVRYLTILITLIQAVSVSVGLRSISGGANGAIMIDMQVFMIVSAFSMLTGTMLLMWIGEQITQRGVGNGISLIIFAGIVSGIPSAISGTFNLVNTGVINILMLIGIVLIVLATIFAIIYVELAERRIPISYARKVVMQNQNKRIMNYIPIKLNLSGVIPPIFASALLVFPSTILQQATSNKTLQAVADFLSPQGYAYNILMFLLIIFFAYFYSSIVFNSKDIADNLRRNGGYIPGLRPGEGTSSFLNSVASKLTLWGSLYLALISTVPWILVKAMGVPFYFGGTAVLIVVQVAIDTMKKIEAQIYMSKYKTLSAVGF.

Transmembrane regions (helical) follow at residues 9-29 (ILIT…PIPG), 61-81 (LSII…MELL), 104-124 (IVRY…SVGL), 141-161 (VFMI…MWIG), 173-193 (ISLI…SGTF), 203-223 (ILML…IIYV), 257-277 (LSGV…STIL), 300-320 (YNIL…SIVF), 355-375 (KLTL…WILV), and 377-397 (AMGV…QVAI).

The protein belongs to the SecY/SEC61-alpha family. Component of the Sec protein translocase complex. Heterotrimer consisting of SecY, SecE and SecG subunits. The heterotrimers can form oligomers, although 1 heterotrimer is thought to be able to translocate proteins. Interacts with the ribosome. Interacts with SecDF, and other proteins may be involved. Interacts with SecA.

It is found in the cell inner membrane. Its function is as follows. The central subunit of the protein translocation channel SecYEG. Consists of two halves formed by TMs 1-5 and 6-10. These two domains form a lateral gate at the front which open onto the bilayer between TMs 2 and 7, and are clamped together by SecE at the back. The channel is closed by both a pore ring composed of hydrophobic SecY resides and a short helix (helix 2A) on the extracellular side of the membrane which forms a plug. The plug probably moves laterally to allow the channel to open. The ring and the pore may move independently. This Helicobacter pylori (strain ATCC 700392 / 26695) (Campylobacter pylori) protein is Protein translocase subunit SecY.